The chain runs to 673 residues: DNA ligase (673 aa).

Residues aspartate 32–aspartate 36, serine 81–leucine 82, and glutamate 111 each bind NAD(+). The active-site N6-AMP-lysine intermediate is lysine 113. Residues arginine 134, glutamate 171, lysine 286, and lysine 310 each coordinate NAD(+). The Zn(2+) site is built by cysteine 404, cysteine 407, cysteine 422, and cysteine 428. Residues asparagine 595 to phenylalanine 673 form the BRCT domain.

The protein belongs to the NAD-dependent DNA ligase family. LigA subfamily. The cofactor is Mg(2+). Requires Mn(2+) as cofactor.

It catalyses the reaction NAD(+) + (deoxyribonucleotide)n-3'-hydroxyl + 5'-phospho-(deoxyribonucleotide)m = (deoxyribonucleotide)n+m + AMP + beta-nicotinamide D-nucleotide.. In terms of biological role, DNA ligase that catalyzes the formation of phosphodiester linkages between 5'-phosphoryl and 3'-hydroxyl groups in double-stranded DNA using NAD as a coenzyme and as the energy source for the reaction. It is essential for DNA replication and repair of damaged DNA. This is DNA ligase from Ureaplasma parvum serovar 3 (strain ATCC 27815 / 27 / NCTC 11736).